The following is a 388-amino-acid chain: Chorismate synthase (388 aa).

2 residues coordinate NADP(+): R39 and R45. Residues 130 to 132 (RSS), 251 to 252 (NA), G296, 311 to 315 (KPIPT), and R337 each bind FMN.

It belongs to the chorismate synthase family. As to quaternary structure, homotetramer. FMNH2 serves as cofactor.

The catalysed reaction is 5-O-(1-carboxyvinyl)-3-phosphoshikimate = chorismate + phosphate. Its pathway is metabolic intermediate biosynthesis; chorismate biosynthesis; chorismate from D-erythrose 4-phosphate and phosphoenolpyruvate: step 7/7. Catalyzes the anti-1,4-elimination of the C-3 phosphate and the C-6 proR hydrogen from 5-enolpyruvylshikimate-3-phosphate (EPSP) to yield chorismate, which is the branch point compound that serves as the starting substrate for the three terminal pathways of aromatic amino acid biosynthesis. This reaction introduces a second double bond into the aromatic ring system. The polypeptide is Chorismate synthase (Geobacillus kaustophilus (strain HTA426)).